The following is a 584-amino-acid chain: Probable DNA ligase (584 aa).

ATP is bound at residue glutamate 248. The active-site N6-AMP-lysine intermediate is lysine 250. ATP is bound by residues arginine 255, arginine 270, glutamate 299, phenylalanine 339, arginine 416, and lysine 422.

Belongs to the ATP-dependent DNA ligase family. The cofactor is Mg(2+).

It carries out the reaction ATP + (deoxyribonucleotide)n-3'-hydroxyl + 5'-phospho-(deoxyribonucleotide)m = (deoxyribonucleotide)n+m + AMP + diphosphate.. Functionally, DNA ligase that seals nicks in double-stranded DNA during DNA replication, DNA recombination and DNA repair. The chain is Probable DNA ligase from Aquifex aeolicus (strain VF5).